Consider the following 159-residue polypeptide: Ribosomal RNA large subunit methyltransferase H (159 aa).

S-adenosyl-L-methionine-binding positions include Leu76, Gly108, and 127–132 (FGLLTL).

It belongs to the RNA methyltransferase RlmH family. In terms of assembly, homodimer.

The protein localises to the cytoplasm. It catalyses the reaction pseudouridine(1915) in 23S rRNA + S-adenosyl-L-methionine = N(3)-methylpseudouridine(1915) in 23S rRNA + S-adenosyl-L-homocysteine + H(+). Its function is as follows. Specifically methylates the pseudouridine at position 1915 (m3Psi1915) in 23S rRNA. In Streptococcus pyogenes serotype M6 (strain ATCC BAA-946 / MGAS10394), this protein is Ribosomal RNA large subunit methyltransferase H.